Here is a 365-residue protein sequence, read N- to C-terminus: Flagellar P-ring protein (365 aa).

Residues 1 to 19 form the signal peptide; that stretch reads MIKFLSALILLLVTTAAQA.

It belongs to the FlgI family. The basal body constitutes a major portion of the flagellar organelle and consists of four rings (L,P,S, and M) mounted on a central rod.

The protein resides in the periplasm. Its subcellular location is the bacterial flagellum basal body. Assembles around the rod to form the L-ring and probably protects the motor/basal body from shearing forces during rotation. This chain is Flagellar P-ring protein, found in Shigella dysenteriae serotype 1 (strain Sd197).